The following is a 358-amino-acid chain: Heme A synthase (358 aa).

The next 8 helical transmembrane spans lie at I22–A42, V107–K127, I133–W153, L172–G192, F208–G228, F269–V289, A302–H322, and V324–V344. H271 contributes to the heme binding site. H332 is a binding site for heme.

Belongs to the COX15/CtaA family. Type 2 subfamily. In terms of assembly, interacts with CtaB. Heme b serves as cofactor.

It is found in the cell membrane. The catalysed reaction is Fe(II)-heme o + 2 A + H2O = Fe(II)-heme a + 2 AH2. The protein operates within porphyrin-containing compound metabolism; heme A biosynthesis; heme A from heme O: step 1/1. Functionally, catalyzes the conversion of heme O to heme A by two successive hydroxylations of the methyl group at C8. The first hydroxylation forms heme I, the second hydroxylation results in an unstable dihydroxymethyl group, which spontaneously dehydrates, resulting in the formyl group of heme A. The sequence is that of Heme A synthase from Bartonella bacilliformis (strain ATCC 35685 / KC583 / Herrer 020/F12,63).